A 424-amino-acid chain; its full sequence is Serine hydroxymethyltransferase (424 aa).

(6S)-5,6,7,8-tetrahydrofolate contacts are provided by residues leucine 123 and 127 to 129; that span reads GHL. Lysine 232 is subject to N6-(pyridoxal phosphate)lysine. Glutamate 245 contributes to the (6S)-5,6,7,8-tetrahydrofolate binding site.

The protein belongs to the SHMT family. As to quaternary structure, homodimer. Requires pyridoxal 5'-phosphate as cofactor.

It localises to the cytoplasm. It carries out the reaction (6R)-5,10-methylene-5,6,7,8-tetrahydrofolate + glycine + H2O = (6S)-5,6,7,8-tetrahydrofolate + L-serine. It participates in one-carbon metabolism; tetrahydrofolate interconversion. It functions in the pathway amino-acid biosynthesis; glycine biosynthesis; glycine from L-serine: step 1/1. Functionally, catalyzes the reversible interconversion of serine and glycine with tetrahydrofolate (THF) serving as the one-carbon carrier. This reaction serves as the major source of one-carbon groups required for the biosynthesis of purines, thymidylate, methionine, and other important biomolecules. Also exhibits THF-independent aldolase activity toward beta-hydroxyamino acids, producing glycine and aldehydes, via a retro-aldol mechanism. This chain is Serine hydroxymethyltransferase, found in Kocuria rhizophila (strain ATCC 9341 / DSM 348 / NBRC 103217 / DC2201).